A 583-amino-acid chain; its full sequence is Propane 2-monooxygenase operon transcriptional activator MimR (583 aa).

Positions 320-513 (LAGRSSSFRR…LRHVLTETLR (194 aa)) constitute a Sigma-54 factor interaction domain. Residues 348 to 355 (GEKGSGRT) and 395 to 404 (DADFAVIVAD) contribute to the ATP site.

In terms of biological role, acts as a transcriptional activator of the mimABCD operon encoding the propane 2-monooxygenase complex. The chain is Propane 2-monooxygenase operon transcriptional activator MimR from Mycolicibacterium goodii (Mycobacterium goodii).